A 283-amino-acid polypeptide reads, in one-letter code: uncharacterized protein (283 aa).

Tyr55 functions as the Proton donor in the catalytic mechanism.

The protein belongs to the aldo/keto reductase family.

The protein resides in the cytoplasm. The protein localises to the nucleus. This is an uncharacterized protein from Schizosaccharomyces pombe (strain 972 / ATCC 24843) (Fission yeast).